A 74-amino-acid polypeptide reads, in one-letter code: Large ribosomal subunit protein bL31 (74 aa).

Zn(2+) contacts are provided by Cys-16, Cys-18, Cys-37, and Cys-40.

Belongs to the bacterial ribosomal protein bL31 family. Type A subfamily. In terms of assembly, part of the 50S ribosomal subunit. Zn(2+) is required as a cofactor.

In terms of biological role, binds the 23S rRNA. The sequence is that of Large ribosomal subunit protein bL31 from Nitrosomonas europaea (strain ATCC 19718 / CIP 103999 / KCTC 2705 / NBRC 14298).